A 130-amino-acid chain; its full sequence is YopE regulator (130 aa).

Positive regulator of YopE. The protein is YopE regulator (yerA) of Yersinia pestis.